The chain runs to 309 residues: Maintenance of mitochondrial morphology protein 1 (309 aa).

The Lumenal portion of the chain corresponds to 1–16 (MGNAYIFSLQPTFTQG). The helical transmembrane segment at 17-37 (LILGQFSILFLLVLVLKYLFF) threads the bilayer. Topologically, residues 38–309 (DTVSDHAYRT…EQQAGELPVN (272 aa)) are cytoplasmic. One can recognise an SMP-LTD domain in the interval 84–293 (ECESADWLNA…LPGLASVSEV (210 aa)).

It belongs to the MMM1 family. As to quaternary structure, homodimer. Component of the ER-mitochondria encounter structure (ERMES) or MDM complex, composed of MMM1, MDM10, MDM12 and MDM34. An MMM1 homodimer associates with one molecule of MDM12 on each side in a pairwise head-to-tail manner, and the SMP-LTD domains of MMM1 and MDM12 generate a continuous hydrophobic tunnel for phospholipid trafficking.

The protein localises to the endoplasmic reticulum membrane. Functionally, component of the ERMES/MDM complex, which serves as a molecular tether to connect the endoplasmic reticulum (ER) and mitochondria. Components of this complex are involved in the control of mitochondrial shape and protein biogenesis, and function in nonvesicular lipid trafficking between the ER and mitochondria. The MDM12-MMM1 subcomplex functions in the major beta-barrel assembly pathway that is responsible for biogenesis of all outer membrane beta-barrel proteins, and acts in a late step after the SAM complex. The MDM10-MDM12-MMM1 subcomplex further acts in the TOM40-specific pathway after the action of the MDM12-MMM1 complex. Essential for establishing and maintaining the structure of mitochondria and maintenance of mtDNA nucleoids. The sequence is that of Maintenance of mitochondrial morphology protein 1 from Postia placenta (strain ATCC 44394 / Madison 698-R) (Brown rot fungus).